The chain runs to 1226 residues: Polyamine-transporting ATPase 13A3 (1226 aa).

Residues 1-28 lie on the Cytoplasmic side of the membrane; the sequence is MDKEERKIINQGQEDEMEIYGYNLSRWK. The stretch at 29–49 is an intramembrane region; sequence LAIVSLGVICTGGFLLLLLYW. The Cytoplasmic segment spans residues 50-205; sequence MPEWRVKATC…IAVKVPSVFK (156 aa). S98 carries the post-translational modification Phosphoserine. The helical transmembrane segment at 206–226 threads the bilayer; sequence LLIKEVLNPFYIFQLFSVILW. The Lumenal segment spans residues 227 to 232; that stretch reads STDEYY. The chain crosses the membrane as a helical span at residues 233–253; sequence YYALAIVVMSIVSIVSSLYSI. The Cytoplasmic segment spans residues 254-409; sequence RKQYVMLHDM…KPTDFKLYRD (156 aa). A helical membrane pass occupies residues 410 to 430; the sequence is AYLFLLCLVAVAGIGFIYTII. Residues 431 to 448 lie on the Lumenal side of the membrane; that stretch reads NSILNEVQVGVIIIESLD. Residues 449-469 traverse the membrane as a helical segment; sequence IITITVPPALPAAMTAGIVYA. Residues 470-940 lie on the Cytoplasmic side of the membrane; it reads QRRLKKIGIF…ALITSFCVFK (471 aa). The active-site 4-aspartylphosphate intermediate is D498. Mg(2+)-binding residues include D498 and T500. Residues 498–500, F628, R684, and D750 contribute to the ATP site; that span reads DKT. Position 817 is a phosphoserine (S817). Residue D883 coordinates Mg(2+). Position 883–887 (883–887) interacts with ATP; it reads DGAND. Residues 941–961 traverse the membrane as a helical segment; that stretch reads FMALYSIIQYFSVTLLYSILS. Position 962 (N962) is a topological domain, lumenal. Residues 963–983 traverse the membrane as a helical segment; that stretch reads LGDFQFLFIDLAIILVVVFTM. Residues 984-999 are Cytoplasmic-facing; the sequence is SLNPAWKELVAQRPPS. A helical transmembrane segment spans residues 1000 to 1020; that stretch reads GLISGALLFSVLSQIIICIGF. The Lumenal portion of the chain corresponds to 1021-1073; it reads QSLGFFWVKQQPWYEVWHPKSDACNATGSLLWNSSHLDNETELDEHNIQNYEN. Residues 1074-1094 form a helical membrane-spanning segment; sequence TTVFFISSFQYLIVAIAFSKG. At 1095–1105 the chain is on the cytoplasmic side; sequence KPFRQPCYKNY. A helical transmembrane segment spans residues 1106–1126; the sequence is FFVFSVIFLYVFILFIMLYPV. Residues 1127–1143 are Lumenal-facing; the sequence is ASVDQVLQIVCVPYQWR. The helical transmembrane segment at 1144–1164 threads the bilayer; that stretch reads VTMLIIVLVNAFVSITVEESV. The Cytoplasmic segment spans residues 1165-1226; the sequence is DRWRKCCLPW…NGSCQIITIT (62 aa).

It belongs to the cation transport ATPase (P-type) (TC 3.A.3) family. Type V subfamily.

The protein resides in the recycling endosome membrane. It is found in the early endosome membrane. Its subcellular location is the late endosome membrane. The catalysed reaction is putrescine(out) + ATP + H2O = putrescine(in) + ADP + phosphate + H(+). ATP-driven pump involved in endocytosis-dependent polyamine transport. Uses ATP as an energy source to transfer polyamine precursor putrescine from the endosomal compartment to the cytosol. The chain is Polyamine-transporting ATPase 13A3 (ATP13A3) from Macaca fascicularis (Crab-eating macaque).